Here is an 85-residue protein sequence, read N- to C-terminus: Sugar transporter SemiSWEET (85 aa).

In terms of domain architecture, PQ-loop spans 2–59; sequence ENLIGYVAAFLTTVSFLPQVLRVVMTKQTRDISRNMYIMFFLGVVLWFVYGILRSDLP. A run of 3 helical transmembrane segments spans residues 5–25, 33–53, and 57–77; these read IGYVAAFLTTVSFLPQVLRVV, ISRNMYIMFFLGVVLWFVYGI, and DLPIILANVVTLFFVTIILYY.

As to quaternary structure, homodimer.

Its subcellular location is the cell membrane. The homodimer mediates transmembrane sugar transport down a concentration gradient. Transport is probably effected by rocking-type movements, where a cargo-binding cavity opens first on one and then on the other side of the membrane. This is Sugar transporter SemiSWEET from Leptospira biflexa serovar Patoc (strain Patoc 1 / ATCC 23582 / Paris).